A 296-amino-acid chain; its full sequence is Elongation factor Ts (296 aa).

The involved in Mg(2+) ion dislocation from EF-Tu stretch occupies residues 79–82 (TDFV).

It belongs to the EF-Ts family.

The protein resides in the cytoplasm. Functionally, associates with the EF-Tu.GDP complex and induces the exchange of GDP to GTP. It remains bound to the aminoacyl-tRNA.EF-Tu.GTP complex up to the GTP hydrolysis stage on the ribosome. This is Elongation factor Ts from Acholeplasma laidlawii (strain PG-8A).